A 476-amino-acid polypeptide reads, in one-letter code: Siroheme synthase (476 aa).

The segment at 1-203 (MNYFPVFADL…RQIEAAKKEL (203 aa)) is precorrin-2 dehydrogenase /sirohydrochlorin ferrochelatase. NAD(+)-binding positions include 22–23 (TI) and 43–44 (QK). Ser128 is modified (phosphoserine). Residues 214–476 (GSVSLVGAGP…LDSLRIERVA (263 aa)) are uroporphyrinogen-III C-methyltransferase. Pro223 contributes to the S-adenosyl-L-methionine binding site. Catalysis depends on Asp246, which acts as the Proton acceptor. The Proton donor role is filled by Lys268. S-adenosyl-L-methionine contacts are provided by residues 299–301 (GGD), Val304, 329–330 (TA), Met381, and Gly410.

In the N-terminal section; belongs to the precorrin-2 dehydrogenase / sirohydrochlorin ferrochelatase family. The protein in the C-terminal section; belongs to the precorrin methyltransferase family.

The catalysed reaction is uroporphyrinogen III + 2 S-adenosyl-L-methionine = precorrin-2 + 2 S-adenosyl-L-homocysteine + H(+). It catalyses the reaction precorrin-2 + NAD(+) = sirohydrochlorin + NADH + 2 H(+). The enzyme catalyses siroheme + 2 H(+) = sirohydrochlorin + Fe(2+). Its pathway is cofactor biosynthesis; adenosylcobalamin biosynthesis; precorrin-2 from uroporphyrinogen III: step 1/1. The protein operates within cofactor biosynthesis; adenosylcobalamin biosynthesis; sirohydrochlorin from precorrin-2: step 1/1. It functions in the pathway porphyrin-containing compound metabolism; siroheme biosynthesis; precorrin-2 from uroporphyrinogen III: step 1/1. It participates in porphyrin-containing compound metabolism; siroheme biosynthesis; siroheme from sirohydrochlorin: step 1/1. Its pathway is porphyrin-containing compound metabolism; siroheme biosynthesis; sirohydrochlorin from precorrin-2: step 1/1. Functionally, multifunctional enzyme that catalyzes the SAM-dependent methylations of uroporphyrinogen III at position C-2 and C-7 to form precorrin-2 via precorrin-1. Then it catalyzes the NAD-dependent ring dehydrogenation of precorrin-2 to yield sirohydrochlorin. Finally, it catalyzes the ferrochelation of sirohydrochlorin to yield siroheme. The chain is Siroheme synthase from Mannheimia succiniciproducens (strain KCTC 0769BP / MBEL55E).